A 270-amino-acid polypeptide reads, in one-letter code: Cytochrome c oxidase subunit 3 (270 aa).

A run of 7 helical transmembrane segments spans residues 21–41, 46–66, 90–110, 131–151, 167–187, 205–225, and 248–268; these read PWPFVASFSALIILLGGVLYF, GSLVILFFGIFFLLLIIFVWW, GIMLFIFSEVILFIAFFWAFF, FFSPWDIPFLNTIILLLSGCA, AIFSLILTIGLALIFTIFQIY, FFMITGLHGFHVIVGTFFLFV, and WYWHFVDVVWLFLFVSIYWWG.

The protein belongs to the cytochrome c oxidase subunit 3 family. In terms of assembly, component of the cytochrome c oxidase (complex IV, CIV), a multisubunit enzyme composed of a catalytic core of 3 subunits and several supernumerary subunits. The complex exists as a monomer or a dimer and forms supercomplexes (SCs) in the inner mitochondrial membrane with ubiquinol-cytochrome c oxidoreductase (cytochrome b-c1 complex, complex III, CIII).

Its subcellular location is the mitochondrion inner membrane. The catalysed reaction is 4 Fe(II)-[cytochrome c] + O2 + 8 H(+)(in) = 4 Fe(III)-[cytochrome c] + 2 H2O + 4 H(+)(out). In terms of biological role, component of the cytochrome c oxidase, the last enzyme in the mitochondrial electron transport chain which drives oxidative phosphorylation. The respiratory chain contains 3 multisubunit complexes succinate dehydrogenase (complex II, CII), ubiquinol-cytochrome c oxidoreductase (cytochrome b-c1 complex, complex III, CIII) and cytochrome c oxidase (complex IV, CIV), that cooperate to transfer electrons derived from NADH and succinate to molecular oxygen, creating an electrochemical gradient over the inner membrane that drives transmembrane transport and the ATP synthase. Cytochrome c oxidase is the component of the respiratory chain that catalyzes the reduction of oxygen to water. Electrons originating from reduced cytochrome c in the intermembrane space (IMS) are transferred via the dinuclear copper A center (CU(A)) of subunit 2 and heme A of subunit 1 to the active site in subunit 1, a binuclear center (BNC) formed by heme A3 and copper B (CU(B)). The BNC reduces molecular oxygen to 2 water molecules using 4 electrons from cytochrome c in the IMS and 4 protons from the mitochondrial matrix. The chain is Cytochrome c oxidase subunit 3 (COX3) from Cyanidium caldarium (Red alga).